The sequence spans 275 residues: UPF0328 protein ECU05_0050 (275 aa).

It belongs to the UPF0328 family.

This Encephalitozoon cuniculi (strain GB-M1) (Microsporidian parasite) protein is UPF0328 protein ECU05_0050.